A 688-amino-acid chain; its full sequence is Elongation factor G (688 aa).

The tr-type G domain maps to Glu8–Cys282. Residues Ala17–Thr24, Asp81–His85, and Asn135–Asp138 contribute to the GTP site.

The protein belongs to the TRAFAC class translation factor GTPase superfamily. Classic translation factor GTPase family. EF-G/EF-2 subfamily.

The protein localises to the cytoplasm. Catalyzes the GTP-dependent ribosomal translocation step during translation elongation. During this step, the ribosome changes from the pre-translocational (PRE) to the post-translocational (POST) state as the newly formed A-site-bound peptidyl-tRNA and P-site-bound deacylated tRNA move to the P and E sites, respectively. Catalyzes the coordinated movement of the two tRNA molecules, the mRNA and conformational changes in the ribosome. The protein is Elongation factor G of Aster yellows witches'-broom phytoplasma (strain AYWB).